A 199-amino-acid chain; its full sequence is Recombination protein RecR (199 aa).

Residues 58–73 (CSICCNITDTDPCSMC) form a C4-type zinc finger. One can recognise a Toprim domain in the interval 81 to 176 (SVICVVEDPR…KVTRIAHGLP (96 aa)).

This sequence belongs to the RecR family.

In terms of biological role, may play a role in DNA repair. It seems to be involved in an RecBC-independent recombinational process of DNA repair. It may act with RecF and RecO. The chain is Recombination protein RecR from Clostridioides difficile (strain 630) (Peptoclostridium difficile).